Here is a 394-residue protein sequence, read N- to C-terminus: Protein-glutamate methylesterase/protein-glutamine glutaminase (394 aa).

A disordered region spans residues 1 to 24 (MSDGFGRPPPPAPAGHPTGAAGGD). A compositionally biased stretch (low complexity) spans 15 to 24 (GHPTGAAGGD). The Response regulatory domain maps to 27 to 145 (RVMVVDDSAV…EIGGADAFKR (119 aa)). Residue D78 is modified to 4-aspartylphosphate. A CheB-type methylesterase domain is found at 191–393 (PAPAVGSVGQ…PYIRKFASRA (203 aa)). Active-site residues include S211, H238, and D335.

It belongs to the CheB family. In terms of processing, phosphorylated by CheA. Phosphorylation of the N-terminal regulatory domain activates the methylesterase activity.

Its subcellular location is the cytoplasm. The catalysed reaction is [protein]-L-glutamate 5-O-methyl ester + H2O = L-glutamyl-[protein] + methanol + H(+). It carries out the reaction L-glutaminyl-[protein] + H2O = L-glutamyl-[protein] + NH4(+). Involved in chemotaxis. Part of a chemotaxis signal transduction system that modulates chemotaxis in response to various stimuli. Catalyzes the demethylation of specific methylglutamate residues introduced into the chemoreceptors (methyl-accepting chemotaxis proteins or MCP) by CheR. Also mediates the irreversible deamidation of specific glutamine residues to glutamic acid. The polypeptide is Protein-glutamate methylesterase/protein-glutamine glutaminase (Azospirillum brasilense).